We begin with the raw amino-acid sequence, 440 residues long: Suppressor of cytokine signaling 4 (440 aa).

Polar residues predominate over residues 1–10; sequence MAENNENISK. The segment at 1 to 29 is disordered; that stretch reads MAENNENISKNVDVRPKTSRSRSADRKDG. Residues 12–29 are compositionally biased toward basic and acidic residues; sequence VDVRPKTSRSRSADRKDG. One can recognise an SH2 domain in the interval 286–381; the sequence is CYWGVMDKYA…FFEPLLSTPL (96 aa). One can recognise an SOCS box domain in the interval 376 to 425; it reads LLSTPLIRTFPFSLQHICRTVICNCTTYDGIDALPIPSSMKLYLKEYHYK.

It participates in protein modification; protein ubiquitination. In terms of biological role, SOCS family proteins form part of a classical negative feedback system that regulates cytokine signal transduction. Substrate-recognition component of a SCF-like ECS (Elongin BC-CUL2/5-SOCS-box protein) E3 ubiquitin-protein ligase complex which mediates the ubiquitination and subsequent proteasomal degradation of target proteins. Inhibits EGF signaling by mediating the degradation of the Tyr-phosphorylated EGF receptor/EGFR. The chain is Suppressor of cytokine signaling 4 (SOCS4) from Homo sapiens (Human).